Consider the following 194-residue polypeptide: 3-isopropylmalate dehydratase small subunit (194 aa).

Belongs to the LeuD family. LeuD type 1 subfamily. As to quaternary structure, heterodimer of LeuC and LeuD.

The catalysed reaction is (2R,3S)-3-isopropylmalate = (2S)-2-isopropylmalate. It participates in amino-acid biosynthesis; L-leucine biosynthesis; L-leucine from 3-methyl-2-oxobutanoate: step 2/4. Functionally, catalyzes the isomerization between 2-isopropylmalate and 3-isopropylmalate, via the formation of 2-isopropylmaleate. This chain is 3-isopropylmalate dehydratase small subunit, found in Anoxybacillus flavithermus (strain DSM 21510 / WK1).